Reading from the N-terminus, the 417-residue chain is DNA primase small subunit (417 aa).

Met1 carries the post-translational modification N-acetylmethionine. Catalysis depends on residues Glu44, Asp109, and Asp111. Mg(2+) is bound by residues Asp109 and Asp111. Residues Asp109 and Asp111 each contribute to the Mn(2+) site. A ribonucleoside 5'-triphosphate is bound at residue 109-111 (DID). The Zn(2+) site is built by Cys121, Cys122, Cys128, and Cys131. A Zinc knuckle motif motif is present at residues 121-131 (CCSSADICSKC). An a ribonucleoside 5'-triphosphate-binding site is contributed by 160-166 (SGRRGVH). Asp305 is a binding site for Mg(2+). A Mn(2+)-binding site is contributed by Asp305. A ribonucleoside 5'-triphosphate-binding positions include 314-317 (HLLK) and His323.

The protein belongs to the eukaryotic-type primase small subunit family. As to quaternary structure, heterodimer of a catalytic subunit PRIM1 and a regulatory subunit PRIM2, also known as the DNA primase complex. Interacts with PRIM2/p58 (via C-terminus). Component of the alpha DNA polymerase complex (also known as the alpha DNA polymerase-primase complex) consisting of four subunits: the catalytic subunit POLA1, the regulatory subunit POLA2, and the primase complex subunits PRIM1 and PRIM2 respectively. Within the complex, POLA1 directly interacts with PRIM2. Requires Mg(2+) as cofactor. Mn(2+) serves as cofactor.

The enzyme catalyses ssDNA + n NTP = ssDNA/pppN(pN)n-1 hybrid + (n-1) diphosphate.. With respect to regulation, the presence of the regulatory subunit PRIM2/p58 accelerates the kinetics of initiation and primer extension. Functionally, catalytic subunit of the DNA primase complex and component of the DNA polymerase alpha complex (also known as the alpha DNA polymerase-primase complex) which play an essential role in the initiation of DNA synthesis. During the S phase of the cell cycle, the DNA polymerase alpha complex (composed of a catalytic subunit POLA1, an accessory subunit POLA2 and two primase subunits, the catalytic subunit PRIM1 and the regulatory subunit PRIM2) is recruited to DNA at the replicative forks via direct interactions with MCM10 and WDHD1. The primase subunit of the polymerase alpha complex initiates DNA synthesis by oligomerising short RNA primers on both leading and lagging strands. These primers are initially extended by the polymerase alpha catalytic subunit and subsequently transferred to polymerase delta and polymerase epsilon for processive synthesis on the lagging and leading strand, respectively. In the primase complex, both subunits are necessary for the initial di-nucleotide formation, but the extension of the primer depends only on the catalytic subunit. Can add both ribo- and deoxynucleotides during elongation of the primers. Synthesizes 9-mer RNA primers (also known as the 'unit length' RNA primers). Incorporates only ribonucleotides in the presence of ribo- and deoxy-nucleotide triphosphates (rNTPs, dNTPs). Requires template thymine or cytidine to start the RNA primer synthesis, with an adenine or guanine at its 5'-end. Binds single stranded DNA. In Mus musculus (Mouse), this protein is DNA primase small subunit (Prim1).